A 553-amino-acid polypeptide reads, in one-letter code: Dihydroxy-acid dehydratase (553 aa).

D78 provides a ligand contact to Mg(2+). C119 provides a ligand contact to [2Fe-2S] cluster. Positions 120 and 121 each coordinate Mg(2+). K121 carries the post-translational modification N6-carboxylysine. C193 lines the [2Fe-2S] cluster pocket. Residue E441 participates in Mg(2+) binding. S467 functions as the Proton acceptor in the catalytic mechanism.

The protein belongs to the IlvD/Edd family. As to quaternary structure, homodimer. [2Fe-2S] cluster serves as cofactor. The cofactor is Mg(2+).

It catalyses the reaction (2R)-2,3-dihydroxy-3-methylbutanoate = 3-methyl-2-oxobutanoate + H2O. It carries out the reaction (2R,3R)-2,3-dihydroxy-3-methylpentanoate = (S)-3-methyl-2-oxopentanoate + H2O. It participates in amino-acid biosynthesis; L-isoleucine biosynthesis; L-isoleucine from 2-oxobutanoate: step 3/4. Its pathway is amino-acid biosynthesis; L-valine biosynthesis; L-valine from pyruvate: step 3/4. Functionally, functions in the biosynthesis of branched-chain amino acids. Catalyzes the dehydration of (2R,3R)-2,3-dihydroxy-3-methylpentanoate (2,3-dihydroxy-3-methylvalerate) into 2-oxo-3-methylpentanoate (2-oxo-3-methylvalerate) and of (2R)-2,3-dihydroxy-3-methylbutanoate (2,3-dihydroxyisovalerate) into 2-oxo-3-methylbutanoate (2-oxoisovalerate), the penultimate precursor to L-isoleucine and L-valine, respectively. In Geobacter sp. (strain M21), this protein is Dihydroxy-acid dehydratase.